We begin with the raw amino-acid sequence, 532 residues long: Intercellular adhesion molecule 1 (532 aa).

The signal sequence occupies residues methionine 1 to alanine 27. Residues glutamine 28–glutamate 480 lie on the Extracellular side of the membrane. Ig-like C2-type domains lie at glycine 41–alanine 103 and glycine 128–arginine 193. Asparagine 47 carries an N-linked (GlcNAc...) asparagine glycan. 2 disulfides stabilise this stretch: cysteine 48/cysteine 92 and cysteine 52/cysteine 96. Residues asparagine 130 and asparagine 145 are each glycosylated (N-linked (GlcNAc...) asparagine). Cysteines 135 and 186 form a disulfide. Positions arginine 152 to glutamate 154 match the Cell attachment site; atypical motif. N-linked (GlcNAc...) asparagine glycosylation is found at asparagine 183, asparagine 202, asparagine 267, asparagine 296, and asparagine 316. An Ig-like C2-type 3 domain is found at aspartate 230–glutamine 297. The cysteines at positions 237 and 290 are disulfide-linked. Positions glycine 325 to alanine 378 constitute an Ig-like C2-type 4 domain. A disulfide bridge links cysteine 332 with cysteine 371. N-linked (GlcNAc...) asparagine glycosylation is found at asparagine 385 and asparagine 406. Disulfide bonds link cysteine 403-cysteine 419, cysteine 419-cysteine 457, and cysteine 431-cysteine 457. The Ig-like C2-type 5 domain maps to asparagine 412–glycine 464. The helical transmembrane segment at valine 481–tyrosine 503 threads the bilayer. Residues asparagine 504–proline 532 lie on the Cytoplasmic side of the membrane. The segment at arginine 513 to proline 532 is disordered. Residues glutamine 515–proline 532 are compositionally biased toward polar residues. A phosphothreonine mark is found at threonine 521 and threonine 530.

It belongs to the immunoglobulin superfamily. ICAM family. In terms of assembly, homodimer. Interacts with MUC1 and promotes cell aggregation in epithelial cells. Interacts with ARHGEF26/SGEF. Interacts (on T cell side) with CD81, CD247 and CD9 at immunological synapses between antigen-presenting cells and T cells. In terms of processing, monoubiquitinated, which is promoted by MARCH9 and leads to endocytosis.

Its subcellular location is the membrane. Its function is as follows. ICAM proteins are ligands for the leukocyte adhesion protein LFA-1 (integrin alpha-L/beta-2). During leukocyte trans-endothelial migration, ICAM1 engagement promotes the assembly of endothelial apical cups through ARHGEF26/SGEF and RHOG activation. This Macaca mulatta (Rhesus macaque) protein is Intercellular adhesion molecule 1 (ICAM1).